A 286-amino-acid polypeptide reads, in one-letter code: Protein HEAT-STRESS-ASSOCIATED 32 (286 aa).

The protein belongs to the phosphosulfolactate synthase family.

In terms of biological role, transactivator required, together with HSP101, for long-term acquired thermotolerance (LAT) maintenance, probably by regulating heat-inducible genes expression, thus being a cellular component of thermomemory. This chain is Protein HEAT-STRESS-ASSOCIATED 32, found in Arabidopsis thaliana (Mouse-ear cress).